We begin with the raw amino-acid sequence, 776 residues long: Kinesin-like protein KLP1 (776 aa).

Residues 5 to 335 (AVKVFVRTRP…LRFASRVRTL (331 aa)) form the Kinesin motor domain. An ATP-binding site is contributed by 91-98 (GQTGAGKT). The stretch at 348-371 (ALLLRRYERQIKELKAELAMRDTL) forms a coiled coil. The disordered stretch occupies residues 441 to 535 (RRATEEGSGA…SNWGDAGPLS (95 aa)). The span at 447–460 (GSGAAARGGDSAGP) shows a compositional bias: low complexity. A coiled-coil region spans residues 579 to 657 (ALADTKASIR…SLKSAREELE (79 aa)). The segment at 658 to 776 (PQIQAVAVAR…TQAVNRGLAR (119 aa)) is globular.

Belongs to the TRAFAC class myosin-kinesin ATPase superfamily. Kinesin family.

It is found in the cytoplasm. The protein localises to the cytoskeleton. It localises to the flagellum axoneme. In terms of biological role, may play a role in rotation or twisting of the central pair microtubules of the flagella axoneme. This chain is Kinesin-like protein KLP1 (KLP1), found in Chlamydomonas reinhardtii (Chlamydomonas smithii).